A 234-amino-acid polypeptide reads, in one-letter code: Glutamine synthetase (234 aa).

The GS catalytic domain maps to 1 to 234; the sequence is KAQEPWFGIE…TRLLVETTLL (234 aa). Residues 126-157 are disordered; sequence GSGGHVNFSNRQPESPPAGKQSRSSAKKLGKR.

Belongs to the glutamine synthetase family. Homooctamer.

The protein localises to the cytoplasm. The catalysed reaction is L-glutamate + NH4(+) + ATP = L-glutamine + ADP + phosphate + H(+). The sequence is that of Glutamine synthetase from Dunaliella salina (Green alga).